The primary structure comprises 39 residues: Omega-theraphotoxin-Asp1g (39 aa).

Disulfide bonds link Cys-4-Cys-25, Cys-8-Cys-31, and Cys-17-Cys-36.

It belongs to the neurotoxin 12 (Hwtx-2) family. 06 (TXP1) subfamily. Expressed by the venom gland.

The protein resides in the secreted. Its function is as follows. Inhibits voltage-gated calcium channels (Cav) in rat cerebellar granule cells. Has insecticidal activity. The protein is Omega-theraphotoxin-Asp1g of Aphonopelma sp. (American tarantula).